The primary structure comprises 473 residues: Lactate utilization protein B (473 aa).

4Fe-4S ferredoxin-type domains lie at 302–332 and 351–380; these read GSEF…GHSY and YNDY…LHDL. C311, C314, C317, C321, C364, C367, and C371 together coordinate [4Fe-4S] cluster.

This sequence belongs to the LutB/YkgF family.

Functionally, is involved in L-lactate degradation and allows cells to grow with lactate as the sole carbon source. Has probably a role as an electron transporter during oxidation of L-lactate. This is Lactate utilization protein B from Bacillus cereus (strain AH820).